The sequence spans 103 residues: Small ribosomal subunit protein uS10 (103 aa).

This sequence belongs to the universal ribosomal protein uS10 family. In terms of assembly, part of the 30S ribosomal subunit.

In terms of biological role, involved in the binding of tRNA to the ribosomes. This is Small ribosomal subunit protein uS10 from Salinibacter ruber (strain DSM 13855 / M31).